The chain runs to 276 residues: 3,4-dihydroxyphenylacetate 2,3-dioxygenase (276 aa).

It depends on Fe cation as a cofactor.

It carries out the reaction 3,4-dihydroxyphenylacetate + O2 = 2-hydroxy-5-carboxymethylmuconate semialdehyde + H(+). The protein operates within aromatic compound metabolism; 4-hydroxyphenylacetate degradation; pyruvate and succinate semialdehyde from 4-hydroxyphenylacetate: step 2/7. In terms of biological role, transforms homoprotocatechuic acid (HPC) into 5-carboxymethyl-2-hydroxy-muconic semialdehyde (CHMS). The sequence is that of 3,4-dihydroxyphenylacetate 2,3-dioxygenase (hpcB) from Escherichia coli.